A 466-amino-acid polypeptide reads, in one-letter code: Glutamate decarboxylase alpha (466 aa).

Residues threonine 62 and asparagine 83 each coordinate substrate. Pyridoxal 5'-phosphate contacts are provided by residues 126–127 (SS), threonine 212, and histidine 275. An N6-(pyridoxal phosphate)lysine modification is found at lysine 276.

It belongs to the group II decarboxylase family. As to quaternary structure, homohexamer. The cofactor is pyridoxal 5'-phosphate.

It carries out the reaction L-glutamate + H(+) = 4-aminobutanoate + CO2. In terms of biological role, converts glutamate to gamma-aminobutyrate (GABA), consuming one intracellular proton in the reaction. The gad system helps to maintain a near-neutral intracellular pH when cells are exposed to extremely acidic conditions. The ability to survive transit through the acidic conditions of the stomach is essential for successful colonization of the mammalian host by commensal and pathogenic bacteria. This chain is Glutamate decarboxylase alpha (gadA), found in Escherichia coli O6:H1 (strain CFT073 / ATCC 700928 / UPEC).